The sequence spans 538 residues: Mitochondria-eating protein (538 aa).

Residues 1 to 273 form an interaction with YWHAG/14-3-3 protein gamma region; that stretch reads MAENLKRLVS…PRSRSCSRSR (273 aa). Ser85 carries the phosphoserine modification. The interval 97–137 is disordered; the sequence is SKVPSLQDTFDRERHKDPSPRDRDMQQLDSNLNSTRSQCNQ. Residues 105-122 are compositionally biased toward basic and acidic residues; the sequence is TFDRERHKDPSPRDRDMQ. Coiled-coil stretches lie at residues 118–187 and 219–256; these read DRDM…RHRN and DQQD…RSSR. Over residues 123–137 the composition is skewed to polar residues; sequence QLDSNLNSTRSQCNQ. 2 positions are modified to phosphoserine: Ser156 and Ser159. 2 disordered regions span residues 173 to 226 and 247 to 294; these read QLKS…TEAM and KSAL…SKLS. The span at 181–210 shows a compositional bias: basic and acidic residues; sequence EDARHRNTDQRSSENRRSEPWSLEERKREQ. Over residues 211–224 the composition is skewed to polar residues; sequence WNSLKQNADQQDTE. Low complexity predominate over residues 253–278; sequence RSSRSRSPSPAPRSRSCSRSRSASPS. Phosphoserine occurs at positions 287 and 509.

Belongs to the MIEAP family. Interacts (via coiled-coil domains) with BNIP3L (via BH3 domain). Interacts (via coiled-coil domains) with BNIP3 (via BH3 domain). In terms of assembly, interacts with YWHAG/14-3-3 protein gamma; a protein that also plays a role in MALM.

It is found in the cytoplasm. The protein localises to the cytosol. It localises to the mitochondrion outer membrane. The protein resides in the mitochondrion matrix. Functionally, key regulator of mitochondrial quality that mediates the repairing or degradation of unhealthy mitochondria in response to mitochondrial damage. Mediator of mitochondrial protein catabolic process (also named MALM) by mediating the degradation of damaged proteins inside mitochondria by promoting the accumulation in the mitochondrial matrix of hydrolases that are characteristic of the lysosomal lumen. Also involved in mitochondrion degradation of damaged mitochondria by promoting the formation of vacuole-like structures (named MIV), which engulf and degrade unhealthy mitochondria by accumulating lysosomes. The physical interaction of SPATA18/MIEAP, BNIP3 and BNIP3L/NIX at the mitochondrial outer membrane regulates the opening of a pore in the mitochondrial double membrane in order to mediate the translocation of lysosomal proteins from the cytoplasm to the mitochondrial matrix. Binds cardiolipin. May form molecular condensates (non-membrane-bounded organelles) within mitochondria that compartmentalize and promote cardiolipin metabolism. This Homo sapiens (Human) protein is Mitochondria-eating protein (SPATA18).